The sequence spans 259 residues: Thiazole synthase (259 aa).

The active-site Schiff-base intermediate with DXP is the Lys-95. 1-deoxy-D-xylulose 5-phosphate is bound by residues Gly-156, 183 to 184 (AG), and 205 to 206 (NS).

Belongs to the ThiG family. As to quaternary structure, homotetramer. Forms heterodimers with either ThiH or ThiS.

It localises to the cytoplasm. The catalysed reaction is [ThiS sulfur-carrier protein]-C-terminal-Gly-aminoethanethioate + 2-iminoacetate + 1-deoxy-D-xylulose 5-phosphate = [ThiS sulfur-carrier protein]-C-terminal Gly-Gly + 2-[(2R,5Z)-2-carboxy-4-methylthiazol-5(2H)-ylidene]ethyl phosphate + 2 H2O + H(+). It participates in cofactor biosynthesis; thiamine diphosphate biosynthesis. Catalyzes the rearrangement of 1-deoxy-D-xylulose 5-phosphate (DXP) to produce the thiazole phosphate moiety of thiamine. Sulfur is provided by the thiocarboxylate moiety of the carrier protein ThiS. In vitro, sulfur can be provided by H(2)S. This is Thiazole synthase from Coxiella burnetii (strain RSA 331 / Henzerling II).